The primary structure comprises 230 residues: Ribonuclease 3 (230 aa).

The 128-residue stretch at L7–G134 folds into the RNase III domain. E47 lines the Mg(2+) pocket. The active site involves D51. Mg(2+) contacts are provided by D120 and E123. Residue E123 is part of the active site. One can recognise a DRBM domain in the interval D161 to N230.

This sequence belongs to the ribonuclease III family. In terms of assembly, homodimer. Mg(2+) serves as cofactor.

Its subcellular location is the cytoplasm. The enzyme catalyses Endonucleolytic cleavage to 5'-phosphomonoester.. Functionally, digests double-stranded RNA. Involved in the processing of primary rRNA transcript to yield the immediate precursors to the large and small rRNAs (23S and 16S). Processes some mRNAs, and tRNAs when they are encoded in the rRNA operon. Processes pre-crRNA and tracrRNA of type II CRISPR loci if present in the organism. The protein is Ribonuclease 3 of Clostridium acetobutylicum (strain ATCC 824 / DSM 792 / JCM 1419 / IAM 19013 / LMG 5710 / NBRC 13948 / NRRL B-527 / VKM B-1787 / 2291 / W).